The following is a 683-amino-acid chain: DNA ligase 2 (683 aa).

Residues 27–31, 76–77, and Glu106 contribute to the NAD(+) site; these read DGEFD and SL. The active-site N6-AMP-lysine intermediate is the Lys108. The NAD(+) site is built by Arg129, Glu169, Lys285, and Lys309. Residues Cys403, Cys406, Cys422, and Cys428 each contribute to the Zn(2+) site. Residues 592-681 form the BRCT domain; sequence SIERTLEGLS…PAAVAAEEPE (90 aa).

It belongs to the NAD-dependent DNA ligase family. LigA subfamily. Requires Mg(2+) as cofactor. The cofactor is Mn(2+).

The catalysed reaction is NAD(+) + (deoxyribonucleotide)n-3'-hydroxyl + 5'-phospho-(deoxyribonucleotide)m = (deoxyribonucleotide)n+m + AMP + beta-nicotinamide D-nucleotide.. In terms of biological role, DNA ligase that catalyzes the formation of phosphodiester linkages between 5'-phosphoryl and 3'-hydroxyl groups in double-stranded DNA using NAD as a coenzyme and as the energy source for the reaction. It is essential for DNA replication and repair of damaged DNA. The protein is DNA ligase 2 of Nocardia farcinica (strain IFM 10152).